We begin with the raw amino-acid sequence, 210 residues long: Protein GET1 (210 aa).

Over 1 to 4 the chain is Lumenal; that stretch reads MASL. The chain crosses the membrane as a helical span at residues 5 to 24; sequence LIIVFLSHVVTYLINTIGAT. Over 25 to 110 the chain is Cytoplasmic; sequence TVDNLLWLLY…SFDLTVKSVR (86 aa). Residues 43–97 are a coiled coil; that stretch reads RTAVEQRRLKGEVVQLKREMKSTSSQDEFAKWAKLRRRHDKAMEEYEAKNKALGK. The chain crosses the membrane as a helical span at residues 111-131; the sequence is FFSTTGLKFFLQFWYSKTPMF. Topologically, residues 132 to 155 are lumenal; that stretch reads ELPRGWVPWQVEWVLSFPRAPLGT. The helical transmembrane segment at 156–172 threads the bilayer; the sequence is VSIQVWSGVCTTVVSLA. Residues 173-210 are Cytoplasmic-facing; that stretch reads GDALGVVIQSLILKMTKRGVARTSEGRPSQPMALKKEL.

This sequence belongs to the WRB/GET1 family. As to quaternary structure, interacts with GET3.

It is found in the endoplasmic reticulum membrane. Required for the post-translational delivery of tail-anchored (TA) proteins to the endoplasmic reticulum. Acts as a membrane receptor for soluble GET3, which recognizes and selectively binds the transmembrane domain of TA proteins in the cytosol. This is Protein GET1 from Uncinocarpus reesii (strain UAMH 1704).